The chain runs to 437 residues: GTPase Der (437 aa).

EngA-type G domains follow at residues 3 to 167 (ALVA…PAEN) and 177 to 353 (PRIA…AHRS). GTP-binding positions include 9 to 16 (GRPNVGKS), 56 to 60 (DTGGW), 119 to 122 (NKVD), 183 to 190 (GRPNAGKS), 230 to 234 (DTAGI), and 295 to 298 (NKWD). The 84-residue stretch at 354 to 437 (TRIPTHKLNE…TPINIFIREK (84 aa)) folds into the KH-like domain.

The protein belongs to the TRAFAC class TrmE-Era-EngA-EngB-Septin-like GTPase superfamily. EngA (Der) GTPase family. Associates with the 50S ribosomal subunit.

In terms of biological role, GTPase that plays an essential role in the late steps of ribosome biogenesis. The protein is GTPase Der of Porphyromonas gingivalis (strain ATCC BAA-308 / W83).